Reading from the N-terminus, the 342-residue chain is C-X-C chemokine receptor type 6 (342 aa).

The Extracellular segment spans residues 1–32 (MAEYDHYEDNGFNSFNDSSQEEHQDFLQFSKV). N-linked (GlcNAc...) asparagine glycosylation occurs at asparagine 16. The helical transmembrane segment at 33–59 (FLPCMYLVVFVCGLVGNSLVLVISIFY) threads the bilayer. At 60–68 (HKLQSLTDV) the chain is on the cytoplasmic side. Residues 69–89 (FLVNLPLADLVFVCTLPFWAY) form a helical membrane-spanning segment. Topologically, residues 90-103 (AGIHEWIFGQVMCK) are extracellular. A disulfide bond links cysteine 102 and cysteine 180. A helical membrane pass occupies residues 104 to 125 (TLLGIYTINFYTSMLILTCITV). Topologically, residues 126–143 (DRFIVVVKATKAYNQQAK) are cytoplasmic. Residues 144 to 164 (KMTWGKVICLLIWVISLLVSL) traverse the membrane as a helical segment. The Extracellular portion of the chain corresponds to 165 to 187 (PQIIYGNVFNLDKLICGYHDEEI). Residues 188–215 (STVVLATQMTLGFFLPLLAMIVCYSVII) form a helical membrane-spanning segment. Over 216-231 (KTLLHAGGFQKHRSLK) the chain is Cytoplasmic. The helical transmembrane segment at 232–259 (IIFLVMAVFLLTQTPFNLVKLIRSTHWE) threads the bilayer. Residues 260 to 275 (YYAMTSFHYTIIVTEA) are Extracellular-facing. A helical membrane pass occupies residues 276-293 (IAYLRACLNPVLYAFVSL). Residues 294–342 (KFRKNFWKLVKDIGCLPYLGVSHQWKSSEDNSKTFSASHNVEATSMFQL) lie on the Cytoplasmic side of the membrane.

It belongs to the G-protein coupled receptor 1 family.

It is found in the cell membrane. Functionally, receptor for the C-X-C chemokine CXCL16. Used as a coreceptor by SIVs and by strains of HIV-2 and m-tropic HIV-1. The sequence is that of C-X-C chemokine receptor type 6 (CXCR6) from Chlorocebus aethiops (Green monkey).